The sequence spans 243 residues: Octanoyltransferase (243 aa).

Residues 49-227 (PLAPQAVWLL…SLSDRFGLVW (179 aa)) enclose the BPL/LPL catalytic domain. Substrate is bound by residues 91 to 98 (RGGEVTHH), 158 to 160 (AIG), and 171 to 173 (GLA). C189 acts as the Acyl-thioester intermediate in catalysis.

Belongs to the LipB family.

It is found in the cytoplasm. The enzyme catalyses octanoyl-[ACP] + L-lysyl-[protein] = N(6)-octanoyl-L-lysyl-[protein] + holo-[ACP] + H(+). The protein operates within protein modification; protein lipoylation via endogenous pathway; protein N(6)-(lipoyl)lysine from octanoyl-[acyl-carrier-protein]: step 1/2. In terms of biological role, catalyzes the transfer of endogenously produced octanoic acid from octanoyl-acyl-carrier-protein onto the lipoyl domains of lipoate-dependent enzymes. Lipoyl-ACP can also act as a substrate although octanoyl-ACP is likely to be the physiological substrate. This Prochlorococcus marinus (strain MIT 9313) protein is Octanoyltransferase.